Reading from the N-terminus, the 197-residue chain is Xanthine phosphoribosyltransferase (197 aa).

Xanthine-binding residues include Leu-20 and Asn-27. 128–132 (ANGQA) contacts 5-phospho-alpha-D-ribose 1-diphosphate. Lys-156 lines the xanthine pocket.

This sequence belongs to the purine/pyrimidine phosphoribosyltransferase family. Xpt subfamily. In terms of assembly, homodimer.

The protein localises to the cytoplasm. The catalysed reaction is XMP + diphosphate = xanthine + 5-phospho-alpha-D-ribose 1-diphosphate. It functions in the pathway purine metabolism; XMP biosynthesis via salvage pathway; XMP from xanthine: step 1/1. Functionally, converts the preformed base xanthine, a product of nucleic acid breakdown, to xanthosine 5'-monophosphate (XMP), so it can be reused for RNA or DNA synthesis. The polypeptide is Xanthine phosphoribosyltransferase (Bacillus anthracis (strain A0248)).